The chain runs to 464 residues: UDP-N-acetylmuramoylalanine--D-glutamate ligase (464 aa).

112 to 118 is an ATP binding site; sequence GTDGKTT.

It belongs to the MurCDEF family.

Its subcellular location is the cytoplasm. It carries out the reaction UDP-N-acetyl-alpha-D-muramoyl-L-alanine + D-glutamate + ATP = UDP-N-acetyl-alpha-D-muramoyl-L-alanyl-D-glutamate + ADP + phosphate + H(+). It participates in cell wall biogenesis; peptidoglycan biosynthesis. Its function is as follows. Cell wall formation. Catalyzes the addition of glutamate to the nucleotide precursor UDP-N-acetylmuramoyl-L-alanine (UMA). The protein is UDP-N-acetylmuramoylalanine--D-glutamate ligase of Chlorobium phaeobacteroides (strain DSM 266 / SMG 266 / 2430).